The following is a 607-amino-acid chain: Autophagy-related protein 16-1 (607 aa).

An interaction with ATG5 region spans residues 13–43 (WKRHISEQLRRRDRLQRQAFEEIILQYNKLL). Positions 79–230 (DSQLQEMAQL…QKELAEAAKE (152 aa)) form a coiled coil. Ser-139 is subject to Phosphoserine. The WIPI2-binding stretch occupies residues 207 to 230 (AENEKDSRRRQARLQKELAEAAKE). An RB1CC1-binding region spans residues 230-242 (EPLPVEQDDDIEV). Phosphoserine occurs at positions 269 and 287. Positions 296–299 (DNVD) match the Caspase cleavage motif. 7 WD repeats span residues 320–359 (AHDG…CEFK), 364–403 (GSNA…LRHT), 406–445 (GHSG…CIKT), 447–484 (FAGS…IVRE), 486–525 (ELLG…IKQT), 532–573 (KCGS…KVLS), and 575–607 (QHSS…WAQY).

The protein belongs to the WD repeat ATG16 family. As to quaternary structure, homodimer. Homooligomer. Heterooligomer with ATG16L2. Interacts with WIPI1. Interacts with WIPI2. Interacts with RB1CC1; the interaction is required for ULK1 complex-dependent autophagy. Interacts with ATG5. Part of the minor complex composed of 4 sets of ATG12-ATG5 and ATG16L1 (400 kDa); this complex interacts with ATG3 leading to disruption of ATG7 interaction and promotion of ATG8-like proteins lipidation. Part of the major complex composed of 8 sets of ATG12-ATG5 and ATG16L1 (800 kDa). Interacts with RAB33B (GTP- and GDP-bound forms); the complex consists of a tetramer where two RAB33B molecules bind independently one molecule of the ATG16L1 homodimer; the interaction promotes ATG12-ATG5-ATG16L1 complex recruitment to phagophores. Interacts (via WD repeats) with TMEM59; the interaction mediates unconventional autophagic activity of TMEM59. Interacts with TLR2. Interacts (via WD repeats) with MEFV. Interacts with PPP1CA; the interaction dephosphorylates ATG16L1 causing dissociation of ATG12-ATG5-ATG16L1 complex. Interacts (via N-terminal) with CLTC. Interacts with NOD1. Interacts with NOD2. Interacts with TUFM. Interacts with TRIM16. Interacts (via WD repeats) with SPATA33. Interacts with IRGM. In terms of processing, proteolytic cleavage by activated CASP3 leads to degradation and may regulate autophagy upon cellular stress and apoptotic stimuli. Post-translationally, phosphorylation at Ser-139 promotes association with the ATG12-ATG5 conjugate to form the ATG12-ATG5-ATG16L1 complex.

The protein localises to the cytoplasm. It is found in the preautophagosomal structure membrane. It localises to the endosome membrane. Its subcellular location is the lysosome membrane. Functionally, plays an essential role in both canonical and non-canonical autophagy: interacts with ATG12-ATG5 to mediate the lipidation to ATG8 family proteins (MAP1LC3A, MAP1LC3B, MAP1LC3C, GABARAPL1, GABARAPL2 and GABARAP). Acts as a molecular hub, coordinating autophagy pathways via distinct domains that support either canonical or non-canonical signaling. During canonical autophagy, interacts with ATG12-ATG5 to mediate the conjugation of phosphatidylethanolamine (PE) to ATG8 proteins, to produce a membrane-bound activated form of ATG8. Thereby, controls the elongation of the nascent autophagosomal membrane. As part of the ATG8 conjugation system with ATG5 and ATG12, required for recruitment of LRRK2 to stressed lysosomes and induction of LRRK2 kinase activity in response to lysosomal stress. Also involved in non-canonical autophagy, a parallel pathway involving conjugation of ATG8 proteins to single membranes at endolysosomal compartments, probably by catalyzing conjugation of phosphatidylserine (PS) to ATG8. Non-canonical autophagy plays a key role in epithelial cells to limit lethal infection by influenza A (IAV) virus. Regulates mitochondrial antiviral signaling (MAVS)-dependent type I interferon (IFN-I) production. Negatively regulates NOD1- and NOD2-driven inflammatory cytokine response. Instead, promotes an autophagy-dependent antibacterial pathway together with NOD1 or NOD2. Plays a role in regulating morphology and function of Paneth cell. The protein is Autophagy-related protein 16-1 of Pongo abelii (Sumatran orangutan).